The following is a 313-amino-acid chain: Solute carrier family 35 member E3 (313 aa).

9 consecutive transmembrane segments (helical) span residues 17–37 (GLLF…WIYV), 40–60 (GFPN…GLYI), 77–97 (LLLL…SLQN), 126–143 (FSTR…GVIL), 153–173 (FLGM…QVWV), 187–206 (LLYY…VPFF), 225–245 (LMVL…YWII), 252–272 (TYNM…YVLF), and 275–295 (PLSI…LAYT).

The protein belongs to the TPT transporter family. SLC35E subfamily.

Its subcellular location is the membrane. Functionally, putative transporter. In Homo sapiens (Human), this protein is Solute carrier family 35 member E3 (SLC35E3).